A 312-amino-acid polypeptide reads, in one-letter code: DNA-directed RNA polymerase subunit alpha (312 aa).

The tract at residues Met-1 to Asp-226 is alpha N-terminal domain (alpha-NTD). Positions Lys-243–Asp-312 are alpha C-terminal domain (alpha-CTD).

This sequence belongs to the RNA polymerase alpha chain family. Homodimer. The RNAP catalytic core consists of 2 alpha, 1 beta, 1 beta' and 1 omega subunit. When a sigma factor is associated with the core the holoenzyme is formed, which can initiate transcription.

It carries out the reaction RNA(n) + a ribonucleoside 5'-triphosphate = RNA(n+1) + diphosphate. Functionally, DNA-dependent RNA polymerase catalyzes the transcription of DNA into RNA using the four ribonucleoside triphosphates as substrates. The protein is DNA-directed RNA polymerase subunit alpha of Lactobacillus acidophilus (strain ATCC 700396 / NCK56 / N2 / NCFM).